The following is a 1396-amino-acid chain: DNA ligase 6 (1396 aa).

Disordered regions lie at residues 441–464 (KNAC…DTTP) and 562–599 (MNLT…GPGQ). 2 short sequence motifs (nuclear localization signal) span residues 572–579 (GKRGKSSG) and 886–893 (LRKISVQT). An ATP-binding site is contributed by Glu-1037. The active-site N6-AMP-lysine intermediate is Lys-1039. The ATP site is built by Arg-1044, Arg-1060, Glu-1092, and Phe-1136. Glu-1092 contacts Mg(2+). Glu-1207 provides a ligand contact to Mg(2+). Residues Lys-1212, Arg-1225, and Lys-1231 each contribute to the ATP site.

It belongs to the ATP-dependent DNA ligase family. Requires Mg(2+) as cofactor. As to expression, mostly expressed in buds and flowers, and, to a lower extent, in stems, leaves, siliques and seeds.

The protein localises to the nucleus. The catalysed reaction is ATP + (deoxyribonucleotide)n-3'-hydroxyl + 5'-phospho-(deoxyribonucleotide)m = (deoxyribonucleotide)n+m + AMP + diphosphate.. In terms of biological role, DNA ligase that seals nicks in double-stranded DNA during DNA replication, DNA recombination and DNA repair. Required to maintain seed viability (e.g. longevity and storability) and during seed germination, probably by repairing DNA damage accumulated during seed development, storage and/or imbibition. Facilitates seed germination in cold conditions (2 degrees Celsius) and under oxidative stress (e.g. menadione, a genotoxic agent). Involved in repair of X-ray-induced damage. Limits stable root transformation by A.tumefaciens T-DNA. The sequence is that of DNA ligase 6 from Arabidopsis thaliana (Mouse-ear cress).